Here is a 150-residue protein sequence, read N- to C-terminus: Seminal ribonuclease (150 aa).

An N-terminal signal peptide occupies residues 1 to 26 (MALKSLVVLPLLVLVLLLVRVQPSLG). The substrate site is built by K33 and R36. The Proton acceptor role is filled by H38. Cystine bridges form between C52-C110, C66-C121, C84-C136, and C91-C98. Residues 67–71 (KPVNT) and K92 each bind substrate. Deamidated asparagine; by deterioration is present on N93. Residue R111 participates in substrate binding. H145 serves as the catalytic Proton donor.

The protein belongs to the pancreatic ribonuclease family. As to quaternary structure, homodimer; disulfide-linked. As to expression, seminal plasma. Can reach 3% of the protein content of this fluid.

The protein localises to the secreted. It carries out the reaction an [RNA] containing cytidine + H2O = an [RNA]-3'-cytidine-3'-phosphate + a 5'-hydroxy-ribonucleotide-3'-[RNA].. The enzyme catalyses an [RNA] containing uridine + H2O = an [RNA]-3'-uridine-3'-phosphate + a 5'-hydroxy-ribonucleotide-3'-[RNA].. Allosteric regulation by both substrate and reaction products. This enzyme hydrolyzes both single- and double-stranded RNA. This Bos taurus (Bovine) protein is Seminal ribonuclease (SRN).